Consider the following 162-residue polypeptide: Ribosome maturation factor RimP (162 aa).

It belongs to the RimP family.

Its subcellular location is the cytoplasm. Its function is as follows. Required for maturation of 30S ribosomal subunits. The chain is Ribosome maturation factor RimP from Cupriavidus taiwanensis (strain DSM 17343 / BCRC 17206 / CCUG 44338 / CIP 107171 / LMG 19424 / R1) (Ralstonia taiwanensis (strain LMG 19424)).